A 341-amino-acid polypeptide reads, in one-letter code: Porin-like protein L (341 aa).

Residues 1–21 form the signal peptide; that stretch reads MNKKLIALAVAAASISSVATA.

The protein belongs to the Gram-negative porin family. In terms of assembly, homotrimer.

It localises to the cell outer membrane. In terms of biological role, forms pores that allow passive diffusion of small molecules across the outer membrane. The chain is Porin-like protein L (ompL) from Photobacterium profundum (strain SS9).